The primary structure comprises 85 residues: MFAPPSSLFVPATAPAPSTSGFTIPANLRRDAYVCPFATAEKERKEREQQQPASKGLNHDLAAQEPLHPSLVSRFPSNYRGSFLR.

Disordered regions lie at residues 1–22 (MFAP…TSGF) and 41–85 (EKER…SFLR). Over residues 75-85 (FPSNYRGSFLR) the composition is skewed to polar residues.

This is an uncharacterized protein from Dryophytes versicolor (chameleon treefrog).